A 376-amino-acid chain; its full sequence is Chaperone protein DnaJ (376 aa).

The J domain maps to 4–68; sequence DYYEILGVAR…ETRARYDRFG (65 aa). The segment at 102-121 is disordered; sequence GGMGGPTQQRRRGGPARGDD. The segment at 136–218 adopts a CR-type zinc-finger fold; the sequence is GGEKEIRISH…CDGKGTNQVT (83 aa). Cys149, Cys152, Cys166, Cys169, Cys192, Cys195, Cys206, and Cys209 together coordinate Zn(2+). CXXCXGXG motif repeat units follow at residues 149 to 156, 166 to 173, 192 to 199, and 206 to 213; these read CETCSGSG, CSTCSGSG, CPTCNGTG, and CDACDGKG.

This sequence belongs to the DnaJ family. In terms of assembly, homodimer. Zn(2+) serves as cofactor.

The protein resides in the cytoplasm. Participates actively in the response to hyperosmotic and heat shock by preventing the aggregation of stress-denatured proteins and by disaggregating proteins, also in an autonomous, DnaK-independent fashion. Unfolded proteins bind initially to DnaJ; upon interaction with the DnaJ-bound protein, DnaK hydrolyzes its bound ATP, resulting in the formation of a stable complex. GrpE releases ADP from DnaK; ATP binding to DnaK triggers the release of the substrate protein, thus completing the reaction cycle. Several rounds of ATP-dependent interactions between DnaJ, DnaK and GrpE are required for fully efficient folding. Also involved, together with DnaK and GrpE, in the DNA replication of plasmids through activation of initiation proteins. In Trichormus variabilis (strain ATCC 29413 / PCC 7937) (Anabaena variabilis), this protein is Chaperone protein DnaJ.